Consider the following 352-residue polypeptide: uncharacterized protein (352 aa).

N-linked (GlcNAc...) asparagine glycosylation is found at Asn-14, Asn-52, and Asn-70. Positions 41–73 (LSDYKKNKDTLNNSNNNINQPFENSNNFNNNSK) are disordered. The span at 50 to 72 (TLNNSNNNINQPFENSNNFNNNS) shows a compositional bias: low complexity. A helical transmembrane segment spans residues 131–151 (IIFKSSGLLITLLVLYLGTFF). Residues Asn-165, Asn-186, Asn-192, Asn-193, Asn-203, and Asn-289 are each glycosylated (N-linked (GlcNAc...) asparagine). A compositionally biased stretch (low complexity) spans 193–213 (NSSNSNNNNINNSNNNNNNNN). The tract at residues 193–219 (NSSNSNNNNINNSNNNNNNNNRILSPN) is disordered.

It localises to the membrane. This is an uncharacterized protein from Dictyostelium discoideum (Social amoeba).